Here is a 249-residue protein sequence, read N- to C-terminus: 2,5-diamino-6-ribosylamino-4(3H)-pyrimidinone 5'-phosphate reductase (249 aa).

NADP(+) is bound by residues T79, D83, M164, and 187–191; that span reads GGIVI.

This sequence belongs to the HTP reductase family. Homodimer.

The enzyme catalyses 2,5-diamino-6-(1-D-ribitylamino)pyrimidin-4(3H)-one 5'-phosphate + NADP(+) = 2,5-diamino-6-(1-D-ribosylamino)pyrimidin-4(3H)-one 5'-phosphate + NADPH + H(+). It catalyses the reaction 2,5-diamino-6-(1-D-ribitylamino)pyrimidin-4(3H)-one 5'-phosphate + NAD(+) = 2,5-diamino-6-(1-D-ribosylamino)pyrimidin-4(3H)-one 5'-phosphate + NADH + H(+). The protein operates within cofactor biosynthesis; riboflavin biosynthesis. Catalyzes an early step in riboflavin biosynthesis, the NADPH-dependent reduction of the ribose side chain of 2,5-diamino-6-ribosylamino-4(3H)-pyrimidinone 5'-phosphate, yielding 2,5-diamino-6-ribitylamino-4(3H)-pyrimidinone 5'-phosphate. The protein is 2,5-diamino-6-ribosylamino-4(3H)-pyrimidinone 5'-phosphate reductase (RIB7) of Kluyveromyces marxianus (Yeast).